Reading from the N-terminus, the 139-residue chain is Large-conductance mechanosensitive channel (139 aa).

2 consecutive transmembrane segments (helical) span residues 14–34 (VVDM…VKSL) and 86–106 (GLFI…FLLI).

The protein belongs to the MscL family. As to quaternary structure, homopentamer.

The protein resides in the cell inner membrane. Channel that opens in response to stretch forces in the membrane lipid bilayer. May participate in the regulation of osmotic pressure changes within the cell. The polypeptide is Large-conductance mechanosensitive channel (Methylobacillus flagellatus (strain ATCC 51484 / DSM 6875 / VKM B-1610 / KT)).